Reading from the N-terminus, the 468-residue chain is Tyrosine-protein phosphatase YopH (468 aa).

The disordered stretch occupies residues 127–194; that stretch reads ARGHVSSHSH…TVSPYGPEAR (68 aa). Residues 130-140 show a composition bias toward low complexity; it reads HVSSHSHSVLH. Residues 152–461 form the Tyrosine-protein phosphatase domain; the sequence is SHLDPRTPPL…DVLIKLAEGQ (310 aa). Cys-403 acts as the Phosphocysteine intermediate in catalysis.

The protein belongs to the protein-tyrosine phosphatase family. Non-receptor class subfamily. Monomer.

It is found in the secreted. It catalyses the reaction O-phospho-L-tyrosyl-[protein] + H2O = L-tyrosyl-[protein] + phosphate. Essential virulence determinant. This protein is a protein tyrosine phosphatase. The essential function of YopH in Yersinia pathogenesis is host-protein dephosphorylation. It contributes to the ability of the bacteria to resist phagocytosis by peritoneal macrophages. This chain is Tyrosine-protein phosphatase YopH (yopH), found in Yersinia enterocolitica.